Reading from the N-terminus, the 884-residue chain is Translation initiation factor IF-2 (884 aa).

The segment at 93–288 (VNTPEAEQAK…KGKRKPSTLQ (196 aa)) is disordered. The span at 99–209 (EQAKAEEQAQ…KMAAENEGKW (111 aa)) shows a compositional bias: basic and acidic residues. The span at 216-229 (QTESADYHVTTSQH) shows a compositional bias: polar residues. Positions 231–246 (RAAEDENDAKVEGDRR) are enriched in basic and acidic residues. Residues 247–261 (SRTRGGKATKQKKGN) are compositionally biased toward basic residues. Basic and acidic residues predominate over residues 262–275 (KLSESKADREEARA). The tr-type G domain maps to 383–552 (HRAPVVTIMG…LLQAEVLELK (170 aa)). Residues 392-399 (GHVDHGKT) are G1. Residue 392 to 399 (GHVDHGKT) participates in GTP binding. The segment at 417–421 (GITQH) is G2. Residues 438-441 (DTPG) form a G3 region. Residues 438–442 (DTPGH) and 492–495 (NKID) each bind GTP. The G4 stretch occupies residues 492–495 (NKID). Positions 528-530 (SAK) are G5.

The protein belongs to the TRAFAC class translation factor GTPase superfamily. Classic translation factor GTPase family. IF-2 subfamily.

It localises to the cytoplasm. Functionally, one of the essential components for the initiation of protein synthesis. Protects formylmethionyl-tRNA from spontaneous hydrolysis and promotes its binding to the 30S ribosomal subunits. Also involved in the hydrolysis of GTP during the formation of the 70S ribosomal complex. In Yersinia pestis bv. Antiqua (strain Antiqua), this protein is Translation initiation factor IF-2.